We begin with the raw amino-acid sequence, 544 residues long: Chaperonin GroEL (544 aa).

ATP contacts are provided by residues 29-32 (TLGP), 86-90 (DGTTT), G413, 476-478 (NAA), and D492.

Belongs to the chaperonin (HSP60) family. As to quaternary structure, forms a cylinder of 14 subunits composed of two heptameric rings stacked back-to-back. Interacts with the co-chaperonin GroES.

It localises to the cytoplasm. The enzyme catalyses ATP + H2O + a folded polypeptide = ADP + phosphate + an unfolded polypeptide.. Functionally, together with its co-chaperonin GroES, plays an essential role in assisting protein folding. The GroEL-GroES system forms a nano-cage that allows encapsulation of the non-native substrate proteins and provides a physical environment optimized to promote and accelerate protein folding. The polypeptide is Chaperonin GroEL (Bacillus cereus (strain B4264)).